The sequence spans 102 residues: Large ribosomal subunit protein P1 (102 aa).

The tract at residues 69–91 is disordered; it reads APAAAAEEKKEEEKKEEKKEEDT. A compositionally biased stretch (basic and acidic residues) spans 74–90; that stretch reads AEEKKEEEKKEEKKEED.

The protein belongs to the eukaryotic ribosomal protein P1/P2 family. As to quaternary structure, part of the 50S ribosomal subunit. Homodimer, it forms part of the ribosomal stalk which helps the ribosome interact with GTP-bound translation factors. Forms a heptameric uL10/P0(P1)2(P1)2(P1)2 complex, where uL10/P0 forms an elongated spine to which the P1 dimers bind in a sequential fashion.

Its function is as follows. Forms part of the ribosomal stalk, playing a central role in the interaction of the ribosome with GTP-bound translation factors. This chain is Large ribosomal subunit protein P1, found in Methanocaldococcus jannaschii (strain ATCC 43067 / DSM 2661 / JAL-1 / JCM 10045 / NBRC 100440) (Methanococcus jannaschii).